The following is a 220-amino-acid chain: uncharacterized protein (220 aa).

It belongs to the DadA oxidoreductase family. FAD is required as a cofactor.

This is an uncharacterized protein from Halorhodospira halophila (Ectothiorhodospira halophila).